Here is a 297-residue protein sequence, read N- to C-terminus: tRNA pseudouridine synthase B (297 aa).

The active-site Nucleophile is the Asp44.

Belongs to the pseudouridine synthase TruB family. Type 1 subfamily.

It carries out the reaction uridine(55) in tRNA = pseudouridine(55) in tRNA. Functionally, responsible for synthesis of pseudouridine from uracil-55 in the psi GC loop of transfer RNAs. The protein is tRNA pseudouridine synthase B of Corynebacterium aurimucosum (strain ATCC 700975 / DSM 44827 / CIP 107346 / CN-1) (Corynebacterium nigricans).